The following is a 477-amino-acid chain: Glycogen synthase (477 aa).

Lys-15 provides a ligand contact to ADP-alpha-D-glucose.

It belongs to the glycosyltransferase 1 family. Bacterial/plant glycogen synthase subfamily.

The catalysed reaction is [(1-&gt;4)-alpha-D-glucosyl](n) + ADP-alpha-D-glucose = [(1-&gt;4)-alpha-D-glucosyl](n+1) + ADP + H(+). It participates in glycan biosynthesis; glycogen biosynthesis. Functionally, synthesizes alpha-1,4-glucan chains using ADP-glucose. This Salmonella choleraesuis (strain SC-B67) protein is Glycogen synthase.